The following is a 374-amino-acid chain: Alginate lyase (374 aa).

An N-terminal signal peptide occupies residues 1 to 23; it reads MHKTRLALSCLLGSLLLSGAVHA. Substrate is bound by residues 62–63, 135–136, and Tyr-253; these read SK and HT.

It belongs to the polysaccharide lyase 5 family.

The protein localises to the periplasm. It carries out the reaction Eliminative cleavage of alginate to give oligosaccharides with 4-deoxy-alpha-L-erythro-hex-4-enuronosyl groups at their non-reducing ends and beta-D-mannuronate at their reducing end.. In terms of biological role, catalyzes the depolymerization of alginate by cleaving the beta-1,4 glycosidic bond between two adjacent sugar residues via a beta-elimination mechanism. May serve to degrade mislocalized alginate that is trapped in the periplasmic space. The sequence is that of Alginate lyase from Azotobacter vinelandii (strain DJ / ATCC BAA-1303).